Here is a 991-residue protein sequence, read N- to C-terminus: MALEDMEKRYRISDLSRELQVSPQEVLQFIRMNGGKVGSTSSMVNEEMRGMIFGNFSVEKKMVDEAMKIRAEKQRRLTRLEEQSRKTYEKEQQLRDSMHVAPLVPVAPLHVAQDVIVEVAAPPSAQADHTVQAEPAVQTESAVQTESAVQTESAVQTEPAVQTEPAVQTEPEVQTEPAAQTEPEVQTEPAAQTEPAAQTEPAAQTESAVQTEADLSDVGEVSIVPENVEVIDVPELPMVPVMPVKEEPSVNDQLVSFDIPQNIGGLTVVGTLDMMNPFDRSESGKMKARKKNFKEQADALKSEFDTPAGEEKLVDDKLVVKKKPVKAAGDGDTAPAADDALAGKKKPGKKKKKPDVDEKVISANIRTTISGMDDSAGSVSRQKFRKMRRMEREKEHEAAEAFRESQRAIVRVTEYASPHELAELMGVTAKEIIQKCFALGKFVTINQRLDKESLELIALEFGFEAEFISEIEATAVVAEVDDAEDLLIRPPVVTIMGHVDHGKTSLLDYIRNSNVVAGESGGITQHIGAYEVTVEGNRKITFLDTPGHEAFTAMRARGAQVTDIVILVVAADDSVMPQTIEAINHAKAAGVPIVVAINKIDKPAANPEKIKTQLSEAGVLVEDWGGEYQCQEISAKQGIGIEELMGKLLTEAEIRELKGNFSEDVLASGIIIESELDKGKGVISTVLVQRGYLRVGDPFVAGNTMGRVRALMDERSKRIHEAGPSQPVRVLGFEALPQSGDVLTVMASDRDARELAQKRQVIRREHEFRRSTRVKLDSIARQIREGLMKELSVIIKADTDGSIQALADGLMKIHNEEVKVQIIHQGVGQITETDVLLAAASDAIIIGFRVRPNVNAKKLAEKEDLDVRFYSVIYHVLEDVEKALEGMLSPELHEESLGSLEIRQVFRVPKVGNVGGCYALEGKVFRDSKVRLLRDGVQVYDGQLDTLRRFKDDVKEVDAGYECGLSLKNYDDIKVGDIVEAYKIVEKKRKL.

2 disordered regions span residues 126 to 220 (QADH…DVGE) and 325 to 359 (VKAA…VDEK). Polar residues-rich tracts occupy residues 138–160 (QTES…TEPA) and 201–210 (PAAQTESAVQ). Residues 326–340 (KAAGDGDTAPAADDA) are compositionally biased toward low complexity. Residues 343 to 353 (GKKKPGKKKKK) are compositionally biased toward basic residues. The 171-residue stretch at 488-658 (IRPPVVTIMG…LTEAEIRELK (171 aa)) folds into the tr-type G domain. Residues 497-504 (GHVDHGKT) are G1. Residue 497–504 (GHVDHGKT) participates in GTP binding. Positions 522–526 (GITQH) are G2. The tract at residues 544-547 (DTPG) is G3. GTP is bound by residues 544 to 548 (DTPGH) and 598 to 601 (NKID). Residues 598–601 (NKID) are G4. The G5 stretch occupies residues 634-636 (SAK).

Belongs to the TRAFAC class translation factor GTPase superfamily. Classic translation factor GTPase family. IF-2 subfamily.

It is found in the cytoplasm. In terms of biological role, one of the essential components for the initiation of protein synthesis. Protects formylmethionyl-tRNA from spontaneous hydrolysis and promotes its binding to the 30S ribosomal subunits. Also involved in the hydrolysis of GTP during the formation of the 70S ribosomal complex. The polypeptide is Translation initiation factor IF-2 (Chlorobium phaeobacteroides (strain DSM 266 / SMG 266 / 2430)).